Reading from the N-terminus, the 335-residue chain is DNA-directed RNA polymerase subunit alpha (335 aa).

The alpha N-terminal domain (alpha-NTD) stretch occupies residues M1–E233. An alpha C-terminal domain (alpha-CTD) region spans residues K264–N335.

It belongs to the RNA polymerase alpha chain family. In plastids the minimal PEP RNA polymerase catalytic core is composed of four subunits: alpha, beta, beta', and beta''. When a (nuclear-encoded) sigma factor is associated with the core the holoenzyme is formed, which can initiate transcription.

The protein localises to the plastid. It localises to the chloroplast. It carries out the reaction RNA(n) + a ribonucleoside 5'-triphosphate = RNA(n+1) + diphosphate. DNA-dependent RNA polymerase catalyzes the transcription of DNA into RNA using the four ribonucleoside triphosphates as substrates. This Pinus koraiensis (Korean pine) protein is DNA-directed RNA polymerase subunit alpha.